Reading from the N-terminus, the 201-residue chain is Ribonuclease HII (201 aa).

The RNase H type-2 domain maps to D12–Q201. Residues D18, E19, and D110 each coordinate a divalent metal cation.

The protein belongs to the RNase HII family. The cofactor is Mn(2+). Requires Mg(2+) as cofactor.

It is found in the cytoplasm. It catalyses the reaction Endonucleolytic cleavage to 5'-phosphomonoester.. Endonuclease that specifically degrades the RNA of RNA-DNA hybrids. This chain is Ribonuclease HII, found in Pseudomonas aeruginosa (strain ATCC 15692 / DSM 22644 / CIP 104116 / JCM 14847 / LMG 12228 / 1C / PRS 101 / PAO1).